The chain runs to 228 residues: DNA repair and recombination protein RadB (228 aa).

The protein belongs to the eukaryotic RecA-like protein family. RadB subfamily.

Involved in DNA repair and in homologous recombination. May regulate the cleavage reactions of the branch-structured DNA. Has a very weak ATPase activity that is not stimulated by DNA. Binds DNA but does not promote DNA strands exchange. In Thermococcus sibiricus (strain DSM 12597 / MM 739), this protein is DNA repair and recombination protein RadB.